Reading from the N-terminus, the 299-residue chain is Serine/threonine-protein kinase 1 (299 aa).

Residues 39 to 277 (IATKPMFEGG…FKGLVSHPWF (239 aa)) enclose the Protein kinase domain. Residues 45 to 53 (FEGGRRNNV) and K66 contribute to the ATP site. Catalysis depends on D153, which acts as the Proton acceptor.

It belongs to the protein kinase superfamily. Ser/Thr protein kinase family.

The protein resides in the virion. It localises to the host cytoplasm. It catalyses the reaction L-seryl-[protein] + ATP = O-phospho-L-seryl-[protein] + ADP + H(+). It carries out the reaction L-threonyl-[protein] + ATP = O-phospho-L-threonyl-[protein] + ADP + H(+). Its function is as follows. Essential for viral replication. It may mediate the virus progression through DNA replication. This is Serine/threonine-protein kinase 1 from African swine fever virus (isolate Pig/Kenya/KEN-50/1950) (ASFV).